We begin with the raw amino-acid sequence, 403 residues long: MTTSTSPAAMLLRRLRRLSWGSTAVQLFILTVVTFGLLAPLACHRLLHSYFYLRHWHLNQMSQDFLQQSLKEGEAALHYFEELPSANGSVPIVWQATPRPWLVITIITVDRQPGFHYVLQVVSQFHRLLQQCGPQCEGHQLFLCNVERSVSHFDAKLLSKYVPVANRYEGTEDDYGDDPSTNSFEKEKQDYVYCLESSLQTYNPDYVLMVEDDAIPEEQIFPVLEHLLRARFSEPHLQDALYLKLYHPERLQHYINPEPMRILEWVGVGMLLGPVLTWIYMRFACRPGFSWPVMLFFCLYSMGLVELVGRHYFLELRRLSPSLYSVVPASQCCTPAMLFPAPAARRTLTYLSQVYCHKGFGKDMALYSLLRAKGERAYVVEPNLVKHIGLFSSLRYNFHPSLL.

The Cytoplasmic segment spans residues 1–22; the sequence is MTTSTSPAAMLLRRLRRLSWGS. Residues 23-43 traverse the membrane as a helical segment; the sequence is TAVQLFILTVVTFGLLAPLAC. Topologically, residues 44 to 264 are lumenal; the sequence is HRLLHSYFYL…INPEPMRILE (221 aa). Residue V109 coordinates UDP-N-acetyl-alpha-D-galactosamine. Intrachain disulfides connect C132–C136 and C144–C194. The DXD motif signature appears at 211-213; sequence EDD. The chain crosses the membrane as a helical span at residues 265–285; the sequence is WVGVGMLLGPVLTWIYMRFAC. Over 286-287 the chain is Cytoplasmic; that stretch reads RP. Residues 288-308 traverse the membrane as a helical segment; sequence GFSWPVMLFFCLYSMGLVELV. Residues 309 to 403 are Lumenal-facing; that stretch reads GRHYFLELRR…LRYNFHPSLL (95 aa). C332 and C333 are oxidised to a cystine. Residues T334, P335, and K362 each coordinate UDP-N-acetyl-alpha-D-galactosamine.

The protein belongs to the PGAP4 family. Post-translationally, glycosylated.

It localises to the golgi apparatus membrane. Golgi-resident glycosylphosphatidylinositol (GPI)-N-acetylgalactosamine transferase that catalyzes the N-acetyl-beta-D-galactosamine transfer from an UDP-N-acetyl-alpha-D-galactosamine to the 4-OH-position of first mannose of the glycosylphosphatidylinositol (GPI) of a GPI-anchored protein (GPI-AP). This modification occurs after the fatty acid remodeling step of the GPI-anchor maturation. The polypeptide is GPI-N-acetylgalactosamine transferase PGAP4 (Mus musculus (Mouse)).